We begin with the raw amino-acid sequence, 72 residues long: UPF0154 protein RBAM_017710 (72 aa).

The helical transmembrane segment at 4 to 24 (WVGILVGVVALLIGVALGFFI) threads the bilayer.

This sequence belongs to the UPF0154 family.

The protein resides in the cell membrane. This Bacillus velezensis (strain DSM 23117 / BGSC 10A6 / LMG 26770 / FZB42) (Bacillus amyloliquefaciens subsp. plantarum) protein is UPF0154 protein RBAM_017710.